The following is a 117-amino-acid chain: Elafin (117 aa).

Positions 1-22 (MRASSFLIVVVFLIAGTLVLEA) are cleaved as a signal peptide. Positions 23–60 (AVTGVPVKGQDTVKGRVPFNGQDPVKGQVSVKGQDKVK) are excised as a propeptide. 2 SVP-1 clotting repeats span residues 29–54 (VKGQDTVKGRVPFNGQDPVKGQVSVK) and 55–72 (GQDKVKAQEPVKGPVSTK). The segment at 29–72 (VKGQDTVKGRVPFNGQDPVKGQVSVKGQDKVKAQEPVKGPVSTK) is 2 X tandem repeats of SVP-1 like motif. One can recognise a WAP domain in the interval 69-117 (VSTKPGSCPIILIRCAMLNPPNRCLKDTDCPGIKKCCEGSCGMACFVPQ). Cystine bridges form between Cys-76–Cys-105, Cys-83–Cys-109, Cys-92–Cys-104, and Cys-98–Cys-113.

Its subcellular location is the secreted. Functionally, neutrophil and pancreatic elastase-specific inhibitor of skin. It may prevent elastase-mediated tissue proteolysis. Has been shown to inhibit the alpha-4-beta-2/CHRNA2-CHRNB2 nicotinic acetylcholine receptor and to produce a weak inhibition on Kv11.1/KCNH2/ERG1 and on the transient receptor potential cation channel subfamily V member 1 (TRPV1). The chain is Elafin (PI3) from Homo sapiens (Human).